The primary structure comprises 293 residues: 4-hydroxy-tetrahydrodipicolinate synthase (293 aa).

Residue Thr-47 coordinates pyruvate. The Proton donor/acceptor role is filled by Tyr-135. Lys-163 acts as the Schiff-base intermediate with substrate in catalysis. Val-205 contributes to the pyruvate binding site.

It belongs to the DapA family. In terms of assembly, homotetramer; dimer of dimers.

It is found in the cytoplasm. It catalyses the reaction L-aspartate 4-semialdehyde + pyruvate = (2S,4S)-4-hydroxy-2,3,4,5-tetrahydrodipicolinate + H2O + H(+). The protein operates within amino-acid biosynthesis; L-lysine biosynthesis via DAP pathway; (S)-tetrahydrodipicolinate from L-aspartate: step 3/4. Functionally, catalyzes the condensation of (S)-aspartate-beta-semialdehyde [(S)-ASA] and pyruvate to 4-hydroxy-tetrahydrodipicolinate (HTPA). This is 4-hydroxy-tetrahydrodipicolinate synthase from Leptothrix cholodnii (strain ATCC 51168 / LMG 8142 / SP-6) (Leptothrix discophora (strain SP-6)).